Reading from the N-terminus, the 550-residue chain is MKKKYKTKFPMARIKKIMQKDEEVGKIASATPILISQCLELFMADLVMKTCKITQAKKGKVISVNHLKECIKQESTFDFLTEIVDRIPDDKNEKRGRPKKTEGEDGGEEEEEEEEEMDMGEEEEEEEDEDDDDSDEEEEEAPKKGGKGSRGGKGSRGGRGGARGGASTRKVKSETSPVLKNTTITTTTATTTPTPTPTPNFANSPKDIQSTSLKKPSARKSNTTSPKSSPFLSSSAGSIQSPPLNNNNNNNNNNNNNNNNNGNFNNNNNFNNNNNNFNNNNNFNNNNFNNNNNNNNFNNNSNNNNNNFNNNNFNNNNYNSNEDENNNNNNNNNNKNNNNNNNSNNSNNNNRGQQFLSSSTASTITLPSNQYQPLAPISLPVLNNSNNNNSSNNNNNNNNNNNNNNNNNNEHILGNLNNNNSNRKINTNFDEEDSNHNINKSNINSIMNSSNNSIDNKDNGFNSFTFSNNNSNFNDNNNYNPNNPNNNNDNNGNGIVLPSLSSTNSSSTLPSFSSVPPILNTNNSNSNNSISHILNNLNSKKPNVEDEDFD.

Residues 7–71 (TKFPMARIKK…ISVNHLKECI (65 aa)) form the Histone-fold domain. A compositionally biased stretch (basic and acidic residues) spans 89–103 (DDKNEKRGRPKKTEG). Disordered stretches follow at residues 89 to 355 (DDKN…GQQF), 378 to 444 (SLPV…SNIN), and 461 to 512 (FNSF…LPSF). Positions 104-140 (EDGGEEEEEEEEEMDMGEEEEEEEDEDDDDSDEEEEE) are enriched in acidic residues. Residues 148-164 (GSRGGKGSRGGRGGARG) are compositionally biased toward gly residues. Residues 182–193 (TTITTTTATTTP) show a composition bias toward low complexity. The span at 200–224 (NFANSPKDIQSTSLKKPSARKSNTT) shows a compositional bias: polar residues. Composition is skewed to low complexity over residues 225–238 (SPKSSPFLSSSAGS), 245–350 (NNNN…NNNN), and 382–422 (LNNS…NNSN).

It belongs to the NC2 alpha/DRAP1 family.

The protein resides in the nucleus. Its function is as follows. Involved in transcriptional regulation. Component of the NC2 complex which represses RNA polymerase II transcription through binding to tbp and thereby inhibiting the assembly of the preinitiation complex. This chain is Dr1-associated corepressor homolog (drap1), found in Dictyostelium discoideum (Social amoeba).